We begin with the raw amino-acid sequence, 108 residues long: Transcription initiation factor IIA subunit 2 (108 aa).

Belongs to the TFIIA subunit 2 family. In terms of assembly, TFIIA is a heterodimer of the large unprocessed subunit 1 and a small subunit gamma. It was originally believed to be a heterotrimer of an alpha, a beta and a gamma subunit. Interacts with NCOA6 general coactivator. TFIIA forms a complex with TBP.

Its subcellular location is the nucleus. In terms of biological role, TFIIA is a component of the transcription machinery of RNA polymerase II and plays an important role in transcriptional activation. TFIIA in a complex with TBP mediates transcriptional activity. The chain is Transcription initiation factor IIA subunit 2 (gtf2a2) from Oncorhynchus mykiss (Rainbow trout).